A 100-amino-acid polypeptide reads, in one-letter code: Large ribosomal subunit protein uL23 (100 aa).

The protein belongs to the universal ribosomal protein uL23 family. As to quaternary structure, part of the 50S ribosomal subunit. Contacts protein L29, and trigger factor when it is bound to the ribosome.

Functionally, one of the early assembly proteins it binds 23S rRNA. One of the proteins that surrounds the polypeptide exit tunnel on the outside of the ribosome. Forms the main docking site for trigger factor binding to the ribosome. This Parasynechococcus marenigrum (strain WH8102) protein is Large ribosomal subunit protein uL23.